Here is a 230-residue protein sequence, read N- to C-terminus: Enolase-phosphatase E1 (230 aa).

It belongs to the HAD-like hydrolase superfamily. MasA/MtnC family. Monomer. It depends on Mg(2+) as a cofactor.

The catalysed reaction is 5-methylsulfanyl-2,3-dioxopentyl phosphate + H2O = 1,2-dihydroxy-5-(methylsulfanyl)pent-1-en-3-one + phosphate. Its pathway is amino-acid biosynthesis; L-methionine biosynthesis via salvage pathway; L-methionine from S-methyl-5-thio-alpha-D-ribose 1-phosphate: step 3/6. It participates in amino-acid biosynthesis; L-methionine biosynthesis via salvage pathway; L-methionine from S-methyl-5-thio-alpha-D-ribose 1-phosphate: step 4/6. Its function is as follows. Bifunctional enzyme that catalyzes the enolization of 2,3-diketo-5-methylthiopentyl-1-phosphate (DK-MTP-1-P) into the intermediate 2-hydroxy-3-keto-5-methylthiopentenyl-1-phosphate (HK-MTPenyl-1-P), which is then dephosphorylated to form the acireductone 1,2-dihydroxy-3-keto-5-methylthiopentene (DHK-MTPene). This is Enolase-phosphatase E1 from Bradyrhizobium sp. (strain BTAi1 / ATCC BAA-1182).